Consider the following 143-residue polypeptide: Large ribosomal subunit protein uL13 (143 aa).

Belongs to the universal ribosomal protein uL13 family. Part of the 50S ribosomal subunit.

Functionally, this protein is one of the early assembly proteins of the 50S ribosomal subunit, although it is not seen to bind rRNA by itself. It is important during the early stages of 50S assembly. The chain is Large ribosomal subunit protein uL13 from Chloroflexus aggregans (strain MD-66 / DSM 9485).